A 556-amino-acid polypeptide reads, in one-letter code: Formate--tetrahydrofolate ligase (556 aa).

Residue 65–72 participates in ATP binding; sequence TPAGEGKS.

It belongs to the formate--tetrahydrofolate ligase family.

It carries out the reaction (6S)-5,6,7,8-tetrahydrofolate + formate + ATP = (6R)-10-formyltetrahydrofolate + ADP + phosphate. The protein operates within one-carbon metabolism; tetrahydrofolate interconversion. This is Formate--tetrahydrofolate ligase from Streptococcus thermophilus (strain ATCC BAA-250 / LMG 18311).